We begin with the raw amino-acid sequence, 1032 residues long: Caspase recruitment domain-containing protein 10 (1032 aa).

Disordered regions lie at residues 1–23, 253–276, and 481–553; these read MPGR…SEAE, RARG…EPDN, and EFPS…MSDI. Phosphoserine is present on serine 18. The CARD domain occupies 23–115; the sequence is EEDALWERIE…EHFTLLTGQE (93 aa). Residues 138-456 adopt a coiled-coil conformation; that stretch reads TEVRRLREAR…LEVQLQRAQG (319 aa). 2 stretches are compositionally biased toward basic and acidic residues: residues 261-276 and 504-517; these read AEEK…EPDN and HNSE…KEIN.

In terms of assembly, CARD10 and BCL10 bind to each other by CARD-CARD interaction. They both participate in a complex with MALT1, where MALT1 binds to BCL10. Interacts with TMEM43; this interaction is essential for EGFR-mediated NF-kappa-B activation. As to expression, detected in adult heart, kidney and liver; lower levels in intestine, placenta, muscle and lung. Also found in fetal lung, liver and kidney.

Its subcellular location is the cytoplasm. In terms of biological role, scaffold protein that plays an important role in mediating the activation of NF-kappa-B via BCL10 or EGFR. The chain is Caspase recruitment domain-containing protein 10 (CARD10) from Homo sapiens (Human).